The sequence spans 1433 residues: Probable ATP-dependent RNA helicase spindle-E (1433 aa).

The tract at residues 76–98 is disordered; the sequence is NRTLDELDSDDEEENMQEQPSVR. A compositionally biased stretch (acidic residues) spans 81 to 91; it reads ELDSDDEEENM. Positions 127-294 constitute a Helicase ATP-binding domain; it reads MKAIRENPVV…FATSSAFPPV (168 aa). Residue 140 to 147 coordinates ATP; it reads GETGCGKT. The short motif at 240-243 is the DEAH box element; it reads DEVH. The Helicase C-terminal domain occupies 354–526; the sequence is QSLQSYEEAK…NSVLKAKELE (173 aa). A Tudor domain is found at 937–1000; the sequence is ASAVTKGLQL…RLMPHELKRD (64 aa).

It belongs to the DEAD box helicase family. DEAH subfamily.

It localises to the cytoplasm. The enzyme catalyses ATP + H2O = ADP + phosphate + H(+). Its function is as follows. Probable ATP-binding RNA helicase which plays a central role during spermatogenesis and oogenesis by repressing transposable elements and preventing their mobilization, which is essential for the germline integrity. Acts via the piRNA metabolic process, which mediates the repression of transposable elements during meiosis by forming complexes composed of piRNAs and Piwi and govern the methylation and subsequent repression of transposons. Involved in the repression of LTR retrotransposon copia. Also involved in telomere regulation by repressing specialized telomeric retroelements HeT-A, TAHRE, and TART; Drosophila telomeres being maintained by transposition of specialized telomeric retroelements. Involved in telomeric trans-silencing, a repression mechanism by which a transposon or a transgene inserted in subtelomeric heterochromatin has the capacity to repress in trans in the female germline, a homologous transposon, or transgene located in euchromatin. Involved in the repression of testis-expressed Stellate genes by the homologous Su(Ste) repeats. Required for anteroposterior and dorsoventral axis formation during oogenesis. The polypeptide is Probable ATP-dependent RNA helicase spindle-E (spn-E) (Drosophila virilis (Fruit fly)).